The following is a 208-amino-acid chain: Small ribosomal subunit protein uS4 (208 aa).

An S4 RNA-binding domain is found at R98–A160.

It belongs to the universal ribosomal protein uS4 family. Part of the 30S ribosomal subunit. Contacts protein S5. The interaction surface between S4 and S5 is involved in control of translational fidelity.

One of the primary rRNA binding proteins, it binds directly to 16S rRNA where it nucleates assembly of the body of the 30S subunit. Functionally, with S5 and S12 plays an important role in translational accuracy. In Syntrophobacter fumaroxidans (strain DSM 10017 / MPOB), this protein is Small ribosomal subunit protein uS4.